A 386-amino-acid polypeptide reads, in one-letter code: Ovalbumin (386 aa).

Residue Gly2 is modified to N-acetylglycine. The segment at residues 22 to 48 (HHANENIFYCPIAIMSALAMVYLGAKD) is a signal peptide (not cleaved). Ser69 bears the Phosphoserine mark. Cys74 and Cys121 are joined by a disulfide. Ca(2+) is bound at residue Glu192. An N-linked (GlcNAc...) asparagine glycan is attached at Asn293. Residue Ser345 is modified to Phosphoserine.

Belongs to the serpin family. Ov-serpin subfamily. In terms of assembly, homodimer. Post-translationally, undergoes proteolytic cleavage first at the canonical P1-P1' site, and then at the P8-P7 site by subtilisin. Major protein of egg white. Expressed in the magnum of the oviduct (at protein level).

Its subcellular location is the secreted. Functionally, non-inhibitory serpin. Storage protein of egg white. The polypeptide is Ovalbumin (SERPINB14) (Gallus gallus (Chicken)).